We begin with the raw amino-acid sequence, 98 residues long: NADH-ubiquinone oxidoreductase chain 4L (98 aa).

A run of 3 helical transmembrane segments spans residues 1–21 (MSLV…GLLM), 25–45 (HLMS…VMAT), and 59–81 (MPII…LVMV).

Belongs to the complex I subunit 4L family. Core subunit of respiratory chain NADH dehydrogenase (Complex I) which is composed of 45 different subunits.

It localises to the mitochondrion inner membrane. The catalysed reaction is a ubiquinone + NADH + 5 H(+)(in) = a ubiquinol + NAD(+) + 4 H(+)(out). Core subunit of the mitochondrial membrane respiratory chain NADH dehydrogenase (Complex I) which catalyzes electron transfer from NADH through the respiratory chain, using ubiquinone as an electron acceptor. Part of the enzyme membrane arm which is embedded in the lipid bilayer and involved in proton translocation. This chain is NADH-ubiquinone oxidoreductase chain 4L (MT-ND4L), found in Equus caballus (Horse).